The following is a 548-amino-acid chain: Beta-lactamase-like protein 2 (548 aa).

The signal sequence occupies residues 1–24 (MKIMNKQSITIFLIICFLINLILS). 4 N-linked (GlcNAc...) asparagine glycosylation sites follow: Asn237, Asn258, Asn443, and Asn459.

This sequence belongs to the beta-lactamase family.

It localises to the secreted. The sequence is that of Beta-lactamase-like protein 2 from Dictyostelium discoideum (Social amoeba).